Reading from the N-terminus, the 50-residue chain is Photosystem II reaction center protein M (50 aa).

Residues 7-27 (GFVASLLFVGIPTIFLIGLFI) traverse the membrane as a helical segment.

Belongs to the PsbM family. PSII is composed of 1 copy each of membrane proteins PsbA, PsbB, PsbC, PsbD, PsbE, PsbF, PsbH, PsbI, PsbJ, PsbK, PsbL, PsbM, PsbT, PsbX, PsbY, Psb30/Ycf12, peripheral proteins PsbO, CyanoQ (PsbQ), PsbU, PsbV and a large number of cofactors. It forms dimeric complexes.

The protein localises to the cellular thylakoid membrane. In terms of biological role, one of the components of the core complex of photosystem II (PSII). PSII is a light-driven water:plastoquinone oxidoreductase that uses light energy to abstract electrons from H(2)O, generating O(2) and a proton gradient subsequently used for ATP formation. It consists of a core antenna complex that captures photons, and an electron transfer chain that converts photonic excitation into a charge separation. This subunit is found at the monomer-monomer interface. In Prochlorococcus marinus subsp. pastoris (strain CCMP1986 / NIES-2087 / MED4), this protein is Photosystem II reaction center protein M.